Consider the following 133-residue polypeptide: Bacteriohemerythrin (133 aa).

Positions 19, 56, 60, 75, 79, 115, and 120 each coordinate Fe cation.

It belongs to the hemerythrin family. In terms of assembly, monomer.

Oxygen-binding protein. May be involved in a storage mechanism or for delivery to oxygen-requiring enzymes. The oxygen-binding site contains two iron atoms. In Campylobacter jejuni subsp. jejuni serotype O:6 (strain 81116 / NCTC 11828), this protein is Bacteriohemerythrin.